We begin with the raw amino-acid sequence, 891 residues long: DNA mismatch repair protein MutS (891 aa).

An ATP-binding site is contributed by 646-653 (GPNMAGKS).

It belongs to the DNA mismatch repair MutS family.

Its function is as follows. This protein is involved in the repair of mismatches in DNA. It is possible that it carries out the mismatch recognition step. This protein has a weak ATPase activity. This is DNA mismatch repair protein MutS from Rickettsia massiliae (strain Mtu5).